The primary structure comprises 240 residues: CRISPR system aCascade subunit Cas5 1 (240 aa).

The protein belongs to the CRISPR-associated protein Cas5 family. Subtype I-A/Apern subfamily. In terms of assembly, part of the aCascade ribonucleoprotein complex, minimally composed of Csa2 and Cas5a, which binds crRNA. Other possible components of aCascade in strain P1 are Cas6b (SSO1437) and Csa5 (SSO1443), while SSO1399, Cas5b (SSO1400) and SSO1401 have sometimes been seen weakly associated. Csa2 is probably the major RNA-binding subunit. The Csa2-Cas5a-crRNA complex also binds target DNA homologous to crRNA, probably forming an R-loop. Purified aCascade forms a filament about 6 nm in width.

In terms of biological role, CRISPR (clustered regularly interspaced short palindromic repeat) is an adaptive immune system that provides protection against mobile genetic elements (viruses, transposable elements and conjugative plasmids). CRISPR clusters contain spacers, sequences complementary to antecedent mobile elements, and target invading nucleic acids. CRISPR clusters are transcribed and processed into CRISPR RNA (crRNA). This chain is CRISPR system aCascade subunit Cas5 1 (cas5a), found in Saccharolobus solfataricus (strain ATCC 35092 / DSM 1617 / JCM 11322 / P2) (Sulfolobus solfataricus).